The following is a 594-amino-acid chain: Bifunctional lycopene cyclase/phytoene synthase (594 aa).

The segment at 1-249 (MGLDYLMVHV…VVFGIAAMHN (249 aa)) is lycopene beta-cyclase. The next 7 helical transmembrane spans lie at 3–23 (LDYL…LTIL), 35–55 (KIVL…SYLI), 77–97 (LEEV…YIIF), 130–150 (LGTL…YIGG), 153–173 (MYLG…WVLM), 176–196 (FLLA…TLYL), and 227–247 (IEEA…IAAM). The tract at residues 256–594 (YKAFISTTAM…RFKRAWLAML (339 aa)) is phytoene synthase.

This sequence in the N-terminal section; belongs to the lycopene beta-cyclase family. The protein in the C-terminal section; belongs to the phytoene/squalene synthase family.

It is found in the membrane. The enzyme catalyses all-trans-lycopene = gamma-carotene. It carries out the reaction gamma-carotene = all-trans-beta-carotene. The catalysed reaction is 2 (2E,6E,10E)-geranylgeranyl diphosphate = 15-cis-phytoene + 2 diphosphate. It participates in carotenoid biosynthesis; beta-carotene biosynthesis. It functions in the pathway carotenoid biosynthesis; phytoene biosynthesis; all-trans-phytoene from geranylgeranyl diphosphate: step 1/1. In terms of biological role, bifunctional enzyme that catalyzes the reactions from geranylgeranyl diphosphate to phytoene (phytoene synthase) and lycopene to beta-carotene via the intermediate gamma-carotene (lycopene cyclase). This chain is Bifunctional lycopene cyclase/phytoene synthase, found in Arthroderma gypseum (strain ATCC MYA-4604 / CBS 118893) (Microsporum gypseum).